The primary structure comprises 130 residues: MSMQDPIADMLTRIRNGQAANKVAINMPSSKLKVAIANVLAAEGYIESVKVLEGAKPELEITLKYFQGKPVVESIQRVSRPGLRIYKRKDELPKVMGGLGVAVISTSKGVMTDRAARQAGLGGEIICYVA.

This sequence belongs to the universal ribosomal protein uS8 family. In terms of assembly, part of the 30S ribosomal subunit. Contacts proteins S5 and S12.

In terms of biological role, one of the primary rRNA binding proteins, it binds directly to 16S rRNA central domain where it helps coordinate assembly of the platform of the 30S subunit. The sequence is that of Small ribosomal subunit protein uS8 from Haemophilus influenzae (strain 86-028NP).